Consider the following 344-residue polypeptide: Heat-inducible transcription repressor HrcA (344 aa).

Belongs to the HrcA family.

In terms of biological role, negative regulator of class I heat shock genes (grpE-dnaK-dnaJ and groELS operons). Prevents heat-shock induction of these operons. The polypeptide is Heat-inducible transcription repressor HrcA (Geobacillus sp. (strain WCH70)).